Reading from the N-terminus, the 131-residue chain is Large ribosomal subunit protein bL17 (131 aa).

It belongs to the bacterial ribosomal protein bL17 family. As to quaternary structure, part of the 50S ribosomal subunit. Contacts protein L32.

The protein is Large ribosomal subunit protein bL17 of Cupriavidus pinatubonensis (strain JMP 134 / LMG 1197) (Cupriavidus necator (strain JMP 134)).